Reading from the N-terminus, the 790-residue chain is Endonuclease MutS2 (790 aa).

334 to 341 (GPNTGGKT) lines the ATP pocket. A Smr domain is found at 713–788 (LDVRGMTLDD…GDGVTIVELH (76 aa)).

This sequence belongs to the DNA mismatch repair MutS family. MutS2 subfamily. As to quaternary structure, homodimer. Binds to stalled ribosomes, contacting rRNA.

Its function is as follows. Endonuclease that is involved in the suppression of homologous recombination and thus may have a key role in the control of bacterial genetic diversity. In terms of biological role, acts as a ribosome collision sensor, splitting the ribosome into its 2 subunits. Detects stalled/collided 70S ribosomes which it binds and splits by an ATP-hydrolysis driven conformational change. Acts upstream of the ribosome quality control system (RQC), a ribosome-associated complex that mediates the extraction of incompletely synthesized nascent chains from stalled ribosomes and their subsequent degradation. Probably generates substrates for RQC. The chain is Endonuclease MutS2 from Caldanaerobacter subterraneus subsp. tengcongensis (strain DSM 15242 / JCM 11007 / NBRC 100824 / MB4) (Thermoanaerobacter tengcongensis).